The primary structure comprises 267 residues: Small ribosomal subunit protein uS3 (267 aa).

A KH type-2 domain is found at 43–111 (IRKAMSKDLE…QVQLNIFEVK (69 aa)). Residues 216–267 (FEEQQAQQSNNRQGRRGDRRPRRGQRNAAPQQNAAAEAPAAAEAPAATETKE) are disordered. A compositionally biased stretch (basic residues) spans 228–240 (QGRRGDRRPRRGQ). Positions 241–267 (RNAAPQQNAAAEAPAAAEAPAATETKE) are enriched in low complexity.

The protein belongs to the universal ribosomal protein uS3 family. As to quaternary structure, part of the 30S ribosomal subunit. Forms a tight complex with proteins S10 and S14.

Binds the lower part of the 30S subunit head. Binds mRNA in the 70S ribosome, positioning it for translation. This is Small ribosomal subunit protein uS3 from Bifidobacterium adolescentis (strain ATCC 15703 / DSM 20083 / NCTC 11814 / E194a).